A 181-amino-acid polypeptide reads, in one-letter code: Isopentenyl-diphosphate Delta-isomerase (181 aa).

2 residues coordinate Mn(2+): His-24 and His-30. The region spanning 28-168 (LLHLAFSVLL…PDTFSVWFPT (141 aa)) is the Nudix hydrolase domain. Cys-68 is an active-site residue. Cys-68 provides a ligand contact to Mg(2+). A Mn(2+)-binding site is contributed by His-70. Mg(2+) is bound at residue Glu-88. Residues Glu-117 and Glu-119 each coordinate Mn(2+). Glu-119 is a catalytic residue.

It belongs to the IPP isomerase type 1 family. Requires Mg(2+) as cofactor. It depends on Mn(2+) as a cofactor.

Its subcellular location is the cytoplasm. It catalyses the reaction isopentenyl diphosphate = dimethylallyl diphosphate. It participates in isoprenoid biosynthesis; dimethylallyl diphosphate biosynthesis; dimethylallyl diphosphate from isopentenyl diphosphate: step 1/1. Catalyzes the 1,3-allylic rearrangement of the homoallylic substrate isopentenyl (IPP) to its highly electrophilic allylic isomer, dimethylallyl diphosphate (DMAPP). The chain is Isopentenyl-diphosphate Delta-isomerase from Aliivibrio fischeri (strain ATCC 700601 / ES114) (Vibrio fischeri).